The chain runs to 361 residues: Cilia- and flagella-associated protein 263 (361 aa).

Belongs to the CFAP263 family. Forms a complex with CFAP184; the interaction is required for functional activity in cilia.

Its subcellular location is the cell projection. It is found in the cilium. In complex with CFAP263, acts as a regulator of ciliary beating that connects radial spoke 3 (RS3) to the inner dynein arm (IDA) and the nexin-dynein regulatory complex (N-DRC). The complex is positioned parallel to N-DRC and forms a connection between the arch at the base of RS3, the IDA tail and N-DRC. The protein is Cilia- and flagella-associated protein 263 (CFAP263) of Tetrahymena thermophila (strain SB210).